An 864-amino-acid polypeptide reads, in one-letter code: Probable beta-glucosidase J (864 aa).

Residue Asp233 is part of the active site. The PA14 domain maps to 411-578; that stretch reads TGEPGYTFRV…DTDAAIQQAV (168 aa). Residues Asn434, Asn447, and Asn503 are each glycosylated (N-linked (GlcNAc...) asparagine).

The protein belongs to the glycosyl hydrolase 3 family.

It localises to the secreted. It catalyses the reaction Hydrolysis of terminal, non-reducing beta-D-glucosyl residues with release of beta-D-glucose.. It participates in glycan metabolism; cellulose degradation. Functionally, beta-glucosidases are one of a number of cellulolytic enzymes involved in the degradation of cellulosic biomass. Catalyzes the last step releasing glucose from the inhibitory cellobiose. The protein is Probable beta-glucosidase J (bglJ) of Neosartorya fischeri (strain ATCC 1020 / DSM 3700 / CBS 544.65 / FGSC A1164 / JCM 1740 / NRRL 181 / WB 181) (Aspergillus fischerianus).